Here is a 359-residue protein sequence, read N- to C-terminus: Homoserine O-acetyltransferase (359 aa).

Positions 49 to 332 constitute an AB hydrolase-1 domain; the sequence is VLICHALTGS…QSSYGHDAFL (284 aa). Residue serine 143 is the Nucleophile of the active site. Substrate is bound at residue arginine 212. Active-site residues include aspartate 299 and histidine 328. Aspartate 329 lines the substrate pocket.

This sequence belongs to the AB hydrolase superfamily. MetX family. Homodimer.

Its subcellular location is the cytoplasm. It carries out the reaction L-homoserine + acetyl-CoA = O-acetyl-L-homoserine + CoA. Its pathway is amino-acid biosynthesis; L-methionine biosynthesis via de novo pathway; O-acetyl-L-homoserine from L-homoserine: step 1/1. In terms of biological role, transfers an acetyl group from acetyl-CoA to L-homoserine, forming acetyl-L-homoserine. The chain is Homoserine O-acetyltransferase from Trichormus variabilis (strain ATCC 29413 / PCC 7937) (Anabaena variabilis).